We begin with the raw amino-acid sequence, 340 residues long: Ferredoxin--NADP reductase (340 aa).

Residues D33, Q41, Y46, A86, F120, D286, and T327 each contribute to the FAD site.

The protein belongs to the ferredoxin--NADP reductase type 2 family. In terms of assembly, homodimer. FAD is required as a cofactor.

It catalyses the reaction 2 reduced [2Fe-2S]-[ferredoxin] + NADP(+) + H(+) = 2 oxidized [2Fe-2S]-[ferredoxin] + NADPH. This Rickettsia conorii (strain ATCC VR-613 / Malish 7) protein is Ferredoxin--NADP reductase.